A 169-amino-acid chain; its full sequence is UPF0065 protein in clcB-clcD intergenic region (169 aa).

Belongs to the UPF0065 (bug) family.

The protein localises to the periplasm. This chain is UPF0065 protein in clcB-clcD intergenic region, found in Pseudomonas knackmussii (strain DSM 6978 / CCUG 54928 / LMG 23759 / B13).